The primary structure comprises 647 residues: Carotenoid phi-ring synthase (647 aa).

Residues Ala-67, 86-87 (EA), Lys-94, and Tyr-120 contribute to the FAD site. Residues 322–416 (VASIPKREVP…VREAGEMLVI (95 aa)) form the Rieske domain. Residues Cys-362, His-364, Cys-380, and His-383 each coordinate [2Fe-2S] cluster. The FAD site is built by Asp-601 and Met-612.

This sequence belongs to the carotenoid/retinoid oxidoreductase family. It depends on FAD as a cofactor. [2Fe-2S] cluster is required as a cofactor.

The catalysed reaction is a carotenoid beta-end derivative + 2 A = a carotenoid phi-end derivative + 2 AH2. Its pathway is carotenoid biosynthesis. Functionally, involved in the biosynthesis of chlorobactene, a carotenoid with aromatic end group. Catalyzes the introduction of two additional double bonds into the ionone ring of gamma-carotene to produce chlorobactene. The reaction includes an intramolecular methyl transfer from position C1 to position C2 of the ring. The sequence is that of Carotenoid phi-ring synthase from Chlorobaculum tepidum (strain ATCC 49652 / DSM 12025 / NBRC 103806 / TLS) (Chlorobium tepidum).